A 277-amino-acid polypeptide reads, in one-letter code: Thymidylate synthase (277 aa).

Residue arginine 21 participates in dUMP binding. Histidine 51 serves as a coordination point for (6R)-5,10-methylene-5,6,7,8-tetrahydrofolate. Residue 126 to 127 (RR) participates in dUMP binding. Cysteine 159 serves as the catalytic Nucleophile. DUMP-binding positions include 179-182 (RSAD), asparagine 190, and 220-222 (HLY). Aspartate 182 contributes to the (6R)-5,10-methylene-5,6,7,8-tetrahydrofolate binding site. Serine 276 contributes to the (6R)-5,10-methylene-5,6,7,8-tetrahydrofolate binding site.

The protein belongs to the thymidylate synthase family. Bacterial-type ThyA subfamily. Homodimer.

The protein resides in the cytoplasm. The enzyme catalyses dUMP + (6R)-5,10-methylene-5,6,7,8-tetrahydrofolate = 7,8-dihydrofolate + dTMP. It functions in the pathway pyrimidine metabolism; dTTP biosynthesis. Catalyzes the reductive methylation of 2'-deoxyuridine-5'-monophosphate (dUMP) to 2'-deoxythymidine-5'-monophosphate (dTMP) while utilizing 5,10-methylenetetrahydrofolate (mTHF) as the methyl donor and reductant in the reaction, yielding dihydrofolate (DHF) as a by-product. This enzymatic reaction provides an intracellular de novo source of dTMP, an essential precursor for DNA biosynthesis. This is Thymidylate synthase from Teredinibacter turnerae (strain ATCC 39867 / T7901).